Reading from the N-terminus, the 275-residue chain is Polyamine aminopropyltransferase 1 (275 aa).

Positions 2-235 (ELWFTEKQTK…GLWTFTIGSK (234 aa)) constitute a PABS domain. Q31 is an S-methyl-5'-thioadenosine binding site. 2 residues coordinate spermidine: H62 and D86. Residues E106 and 137–138 (DG) contribute to the S-methyl-5'-thioadenosine site. The active-site Proton acceptor is D155. Residue 155-158 (DSTE) participates in spermidine binding. P162 serves as a coordination point for S-methyl-5'-thioadenosine.

This sequence belongs to the spermidine/spermine synthase family. Homodimer or homotetramer.

The protein resides in the cytoplasm. It catalyses the reaction S-adenosyl 3-(methylsulfanyl)propylamine + putrescine = S-methyl-5'-thioadenosine + spermidine + H(+). It functions in the pathway amine and polyamine biosynthesis; spermidine biosynthesis; spermidine from putrescine: step 1/1. Functionally, catalyzes the irreversible transfer of a propylamine group from the amino donor S-adenosylmethioninamine (decarboxy-AdoMet) to putrescine (1,4-diaminobutane) to yield spermidine. The sequence is that of Polyamine aminopropyltransferase 1 from Bacillus cereus (strain ATCC 14579 / DSM 31 / CCUG 7414 / JCM 2152 / NBRC 15305 / NCIMB 9373 / NCTC 2599 / NRRL B-3711).